The primary structure comprises 169 residues: Steroid receptor-associated and regulated protein (169 aa).

Interacts with 14-3-3 proteins. As to expression, expressed in breast tumors with a higher expression level in estrogen receptor-positive cancers.

Functionally, may regulate the transcriptional function of androgen and estrogen receptors. The protein is Steroid receptor-associated and regulated protein of Homo sapiens (Human).